We begin with the raw amino-acid sequence, 256 residues long: Trans-aconitate 2-methyltransferase (256 aa).

The protein belongs to the methyltransferase superfamily. Tam family.

Its subcellular location is the cytoplasm. It carries out the reaction trans-aconitate + S-adenosyl-L-methionine = (E)-3-(methoxycarbonyl)pent-2-enedioate + S-adenosyl-L-homocysteine. In terms of biological role, catalyzes the S-adenosylmethionine monomethyl esterification of trans-aconitate. The chain is Trans-aconitate 2-methyltransferase from Rhizobium etli (strain ATCC 51251 / DSM 11541 / JCM 21823 / NBRC 15573 / CFN 42).